Here is a 290-residue protein sequence, read N- to C-terminus: Nucleoid occlusion protein (290 aa).

Residues 153-172 (EALAQRLGKGQSTIANKLRL) constitute a DNA-binding region (H-T-H motif).

This sequence belongs to the ParB family.

Its subcellular location is the cytoplasm. It is found in the nucleoid. Effects nucleoid occlusion by binding relatively nonspecifically to DNA and preventing the assembly of the division machinery in the vicinity of the nucleoid, especially under conditions that disturb the cell cycle. It helps to coordinate cell division and chromosome segregation by preventing the formation of the Z ring through the nucleoid, which would cause chromosome breakage. The polypeptide is Nucleoid occlusion protein (Bacillus cytotoxicus (strain DSM 22905 / CIP 110041 / 391-98 / NVH 391-98)).